The following is a 297-amino-acid chain: Putative 6-phosphogluconate dehydrogenase YqeC (297 aa).

NAD(+) contacts are provided by residues Gly-7–Gly-12 and Asn-94. Substrate-binding positions include Asn-94 and Ser-120–Gly-122. Residue Lys-170 is the Proton acceptor of the active site. Residue His-173–Asn-174 coordinates substrate. Residue Glu-177 is the Proton donor of the active site. Substrate is bound by residues Tyr-178 and Arg-268.

It belongs to the 6-phosphogluconate dehydrogenase family.

Functionally, may act as NAD-dependent 6-P-gluconate dehydrogenase. This chain is Putative 6-phosphogluconate dehydrogenase YqeC (yqeC), found in Bacillus subtilis (strain 168).